The chain runs to 325 residues: Holliday junction branch migration complex subunit RuvB (325 aa).

The segment at 1 to 181 (MENRLINPVE…FGIVQRLEFY (181 aa)) is large ATPase domain (RuvB-L). ATP is bound by residues Ile-20, Arg-21, Gly-62, Lys-65, Thr-66, Thr-67, 128–130 (EDF), Arg-171, Tyr-181, and Arg-218. Thr-66 contacts Mg(2+). The small ATPAse domain (RuvB-S) stretch occupies residues 182–252 (NIEDLTTIVS…IADSALDMLA (71 aa)). A head domain (RuvB-H) region spans residues 255–325 (RRGLDHLDRR…VLTQMAIDQL (71 aa)). DNA-binding residues include Arg-291, Arg-310, and Arg-315.

The protein belongs to the RuvB family. Homohexamer. Forms an RuvA(8)-RuvB(12)-Holliday junction (HJ) complex. HJ DNA is sandwiched between 2 RuvA tetramers; dsDNA enters through RuvA and exits via RuvB. An RuvB hexamer assembles on each DNA strand where it exits the tetramer. Each RuvB hexamer is contacted by two RuvA subunits (via domain III) on 2 adjacent RuvB subunits; this complex drives branch migration. In the full resolvosome a probable DNA-RuvA(4)-RuvB(12)-RuvC(2) complex forms which resolves the HJ.

The protein localises to the cytoplasm. The catalysed reaction is ATP + H2O = ADP + phosphate + H(+). Its function is as follows. The RuvA-RuvB-RuvC complex processes Holliday junction (HJ) DNA during genetic recombination and DNA repair, while the RuvA-RuvB complex plays an important role in the rescue of blocked DNA replication forks via replication fork reversal (RFR). RuvA specifically binds to HJ cruciform DNA, conferring on it an open structure. The RuvB hexamer acts as an ATP-dependent pump, pulling dsDNA into and through the RuvAB complex. RuvB forms 2 homohexamers on either side of HJ DNA bound by 1 or 2 RuvA tetramers; 4 subunits per hexamer contact DNA at a time. Coordinated motions by a converter formed by DNA-disengaged RuvB subunits stimulates ATP hydrolysis and nucleotide exchange. Immobilization of the converter enables RuvB to convert the ATP-contained energy into a lever motion, pulling 2 nucleotides of DNA out of the RuvA tetramer per ATP hydrolyzed, thus driving DNA branch migration. The RuvB motors rotate together with the DNA substrate, which together with the progressing nucleotide cycle form the mechanistic basis for DNA recombination by continuous HJ branch migration. Branch migration allows RuvC to scan DNA until it finds its consensus sequence, where it cleaves and resolves cruciform DNA. The protein is Holliday junction branch migration complex subunit RuvB of Psychrobacter sp. (strain PRwf-1).